A 226-amino-acid polypeptide reads, in one-letter code: Leucyl/phenylalanyl-tRNA--protein transferase (226 aa).

The protein belongs to the L/F-transferase family.

The protein resides in the cytoplasm. It catalyses the reaction N-terminal L-lysyl-[protein] + L-leucyl-tRNA(Leu) = N-terminal L-leucyl-L-lysyl-[protein] + tRNA(Leu) + H(+). It carries out the reaction N-terminal L-arginyl-[protein] + L-leucyl-tRNA(Leu) = N-terminal L-leucyl-L-arginyl-[protein] + tRNA(Leu) + H(+). The enzyme catalyses L-phenylalanyl-tRNA(Phe) + an N-terminal L-alpha-aminoacyl-[protein] = an N-terminal L-phenylalanyl-L-alpha-aminoacyl-[protein] + tRNA(Phe). In terms of biological role, functions in the N-end rule pathway of protein degradation where it conjugates Leu, Phe and, less efficiently, Met from aminoacyl-tRNAs to the N-termini of proteins containing an N-terminal arginine or lysine. The chain is Leucyl/phenylalanyl-tRNA--protein transferase from Ectopseudomonas mendocina (strain ymp) (Pseudomonas mendocina).